The sequence spans 322 residues: PI-PLC X domain-containing protein 3 (322 aa).

A PI-PLC X-box domain is found at 22 to 197 (TLHGIPLTNL…EYQVLVFYHN (176 aa)). Residues His37 and His114 contribute to the active site.

The chain is PI-PLC X domain-containing protein 3 (plcxd3) from Danio rerio (Zebrafish).